The sequence spans 362 residues: Type-2 angiotensin II receptor (362 aa).

Residues 1–44 (MKANFSLATISKNITSSLHVGFVNISSNESTFNCSHKPSDKHLD) are Extracellular-facing. Residues Asn4, Asn13, Asn24, Asn28, and Asn33 are each glycosylated (N-linked (GlcNAc...) asparagine). Intrachain disulfides connect Cys34-Cys289 and Cys116-Cys194. A helical transmembrane segment spans residues 45-69 (AIPVLYYIIFGVGFLVNTIVVTLFC). The Cytoplasmic segment spans residues 70-79 (CQKGPKKVSS). Residues 80-103 (IYIFNLAVADLLLLATLPLWATYY) form a helical membrane-spanning segment. Tyr102 and Tyr103 together coordinate angiotensin II. The Extracellular segment spans residues 104 to 113 (SHRYDWIFGP). Residues 114–139 (VMCKVFGSFLTLNMFASIFFITCMSV) form a helical membrane-spanning segment. Residues 140–158 (DRYQSVIYPFLSQRRNPWQ) lie on the Cytoplasmic side of the membrane. A helical transmembrane segment spans residues 159-180 (ASYIVPLVWCMACLSSLPTFYF). Positions 181, 203, and 214 each coordinate angiotensin II. At 181–205 (RDVRTIEYLGVNACIMAFPPEKYAQ) the chain is on the extracellular side. The helical transmembrane segment at 206–231 (WSAGIALMKNILGFIIPLIFIATCYF) threads the bilayer. The Cytoplasmic segment spans residues 232–256 (GIRKHLLKTNSYGKNRITRDQVLKM). A helical membrane pass occupies residues 257–280 (AAAVVLAFIICWLPFHVLTFLDAL). Asp278 serves as a coordination point for angiotensin II. The Extracellular segment spans residues 281–293 (AWMGVINSCEVIA). Residues 294–319 (VIDLALPFAILLGFTNSCINPFLYCF) traverse the membrane as a helical segment. Asp296 is a binding site for angiotensin II. Residues 320–362 (VGNRFQQKLRRVFRVPITWLQGKRENGSCGKSSSFREMETFVS) are Cytoplasmic-facing. Positions 323-332 (RFQQKLRRVF) are helix VIII.

This sequence belongs to the G-protein coupled receptor 1 family. As to quaternary structure, interacts with MTUS1.

The protein localises to the cell membrane. Functionally, receptor for angiotensin II, a vasoconstricting peptide. Signals primarily via a non-canonical G-protein- and beta-arrestin independent pathways. Cooperates with MTUS1 to inhibit ERK2 activation and cell proliferation. This is Type-2 angiotensin II receptor (AGTR2) from Ovis aries (Sheep).